A 319-amino-acid polypeptide reads, in one-letter code: Lipoyl synthase (319 aa).

The [4Fe-4S] cluster site is built by Cys66, Cys71, Cys77, Cys92, Cys96, Cys99, and Ser305. The region spanning 78 to 294 (FNRGTATFMI…KKEALSIGFT (217 aa)) is the Radical SAM core domain.

Belongs to the radical SAM superfamily. Lipoyl synthase family. [4Fe-4S] cluster is required as a cofactor.

Its subcellular location is the cytoplasm. It catalyses the reaction [[Fe-S] cluster scaffold protein carrying a second [4Fe-4S](2+) cluster] + N(6)-octanoyl-L-lysyl-[protein] + 2 oxidized [2Fe-2S]-[ferredoxin] + 2 S-adenosyl-L-methionine + 4 H(+) = [[Fe-S] cluster scaffold protein] + N(6)-[(R)-dihydrolipoyl]-L-lysyl-[protein] + 4 Fe(3+) + 2 hydrogen sulfide + 2 5'-deoxyadenosine + 2 L-methionine + 2 reduced [2Fe-2S]-[ferredoxin]. Its pathway is protein modification; protein lipoylation via endogenous pathway; protein N(6)-(lipoyl)lysine from octanoyl-[acyl-carrier-protein]: step 2/2. Its function is as follows. Catalyzes the radical-mediated insertion of two sulfur atoms into the C-6 and C-8 positions of the octanoyl moiety bound to the lipoyl domains of lipoate-dependent enzymes, thereby converting the octanoylated domains into lipoylated derivatives. The polypeptide is Lipoyl synthase (Buchnera aphidicola subsp. Schizaphis graminum (strain Sg)).